We begin with the raw amino-acid sequence, 249 residues long: NAD kinase (249 aa).

Aspartate 45 serves as the catalytic Proton acceptor. Residues 45–46, arginine 50, 110–111, aspartate 138, and 149–154 contribute to the NAD(+) site; these read DG, NE, and SGWGMS.

It belongs to the NAD kinase family. A divalent metal cation serves as cofactor.

It is found in the cytoplasm. The enzyme catalyses NAD(+) + ATP = ADP + NADP(+) + H(+). Functionally, involved in the regulation of the intracellular balance of NAD and NADP, and is a key enzyme in the biosynthesis of NADP. Catalyzes specifically the phosphorylation on 2'-hydroxyl of the adenosine moiety of NAD to yield NADP. The protein is NAD kinase of Saccharolobus solfataricus (strain ATCC 35092 / DSM 1617 / JCM 11322 / P2) (Sulfolobus solfataricus).